A 91-amino-acid polypeptide reads, in one-letter code: Large ribosomal subunit protein uL23c (91 aa).

This sequence belongs to the universal ribosomal protein uL23 family. As to quaternary structure, part of the 50S ribosomal subunit.

The protein localises to the plastid. The protein resides in the chloroplast. Binds to 23S rRNA. This chain is Large ribosomal subunit protein uL23c (rpl23), found in Pinus thunbergii (Japanese black pine).